Consider the following 195-residue polypeptide: HTH-type transcriptional regulator BetI (195 aa).

The 61-residue stretch at 8–68 (EIRRAQLIDA…ATMRHVLRDL (61 aa)) folds into the HTH tetR-type domain. Residues 31 to 50 (TLASVAQRASISTGIVSHYF) constitute a DNA-binding region (H-T-H motif).

It functions in the pathway amine and polyamine biosynthesis; betaine biosynthesis via choline pathway [regulation]. Functionally, repressor involved in the biosynthesis of the osmoprotectant glycine betaine. It represses transcription of the choline transporter BetT and the genes of BetAB involved in the synthesis of glycine betaine. This is HTH-type transcriptional regulator BetI from Paraburkholderia phytofirmans (strain DSM 17436 / LMG 22146 / PsJN) (Burkholderia phytofirmans).